The sequence spans 267 residues: Thiamine pyrophosphokinase 2 (267 aa).

This sequence belongs to the thiamine pyrophosphokinase family. In terms of tissue distribution, expressed in leaves and at lower levels in flowers.

It is found in the cytoplasm. The protein resides in the cytosol. It catalyses the reaction thiamine + ATP = thiamine diphosphate + AMP + H(+). Its pathway is cofactor biosynthesis; thiamine diphosphate biosynthesis; thiamine diphosphate from thiamine: step 1/1. Catalyzes the phosphorylation of thiamine to thiamine pyrophosphate (TPP). TPP is an active cofactor for enzymes involved in glycolysis and energy production. Plant leaves require high levels of TPP for photosynthesis and carbohydrate metabolism. The sequence is that of Thiamine pyrophosphokinase 2 from Arabidopsis thaliana (Mouse-ear cress).